We begin with the raw amino-acid sequence, 760 residues long: Endoplasmin homolog (760 aa).

A signal peptide spans 1-23 (MRFLLVGFVALLAVSAFIPNVYA). 4 residues coordinate ATP: Asn-95, Asp-137, Asn-150, and Phe-187. An N-linked (GlcNAc...) asparagine glycan is attached at Asn-95. Asn-423 is a glycosylation site (N-linked (GlcNAc...) asparagine). Residues 727 to 760 (SQDAQVETEQHIEEAEPEPEAAEETTIEEEHSEL) are disordered. Over residues 741 to 760 (AEPEPEAAEETTIEEEHSEL) the composition is skewed to acidic residues. Positions 757-760 (HSEL) match the Prevents secretion from ER motif.

It belongs to the heat shock protein 90 family.

Its subcellular location is the endoplasmic reticulum lumen. Functionally, molecular chaperone that functions in the processing and transport of secreted proteins. In Caenorhabditis elegans, this protein is Endoplasmin homolog.